Reading from the N-terminus, the 292-residue chain is Tetratricopeptide repeat protein 1 (292 aa).

Composition is skewed to basic and acidic residues over residues 1–12 and 47–64; these read MEEKSEDCKVPE and KAAEAHPQDDHVEEECFH. The segment at 1–125 is disordered; sequence MEEKSEDCKV…SAKLKEEGNE (125 aa). Positions 88–98 are enriched in acidic residues; sequence SSSELDEEYLI. Residue Ser90 is modified to Phosphoserine. Residues 99–125 show a composition bias toward basic and acidic residues; sequence ELEKNMPEEEKQKRREESAKLKEEGNE. TPR repeat units follow at residues 116–149, 155–188, and 189–222; these read SAKLKEEGNERFKRGDYMEAESSYSQALQMCPAC, SVLFSNRAAARMKQDKKETAITDCSKAIQLNPTY, and IRAILRRAELYEKTDKLDEALEDYKSVLEKDPSV.

Interacts with the GAP domain of NF1. Interacts (via TPR repeats) with HSP90AA1 and HSPA8.

In Mus musculus (Mouse), this protein is Tetratricopeptide repeat protein 1 (Ttc1).